Reading from the N-terminus, the 141-residue chain is Nucleoside diphosphate kinase (141 aa).

ATP is bound by residues lysine 11, phenylalanine 59, arginine 87, threonine 93, arginine 104, and asparagine 114. Catalysis depends on histidine 117, which acts as the Pros-phosphohistidine intermediate.

It belongs to the NDK family. As to quaternary structure, homotetramer. The cofactor is Mg(2+).

The protein resides in the cytoplasm. It catalyses the reaction a 2'-deoxyribonucleoside 5'-diphosphate + ATP = a 2'-deoxyribonucleoside 5'-triphosphate + ADP. The catalysed reaction is a ribonucleoside 5'-diphosphate + ATP = a ribonucleoside 5'-triphosphate + ADP. In terms of biological role, major role in the synthesis of nucleoside triphosphates other than ATP. The ATP gamma phosphate is transferred to the NDP beta phosphate via a ping-pong mechanism, using a phosphorylated active-site intermediate. This chain is Nucleoside diphosphate kinase, found in Bordetella avium (strain 197N).